Reading from the N-terminus, the 363-residue chain is Flagellar P-ring protein (363 aa).

The signal sequence occupies residues 1–18 (MWKKVLIAIVFITSFSFA).

This sequence belongs to the FlgI family. As to quaternary structure, the basal body constitutes a major portion of the flagellar organelle and consists of four rings (L,P,S, and M) mounted on a central rod.

The protein resides in the periplasm. It localises to the bacterial flagellum basal body. In terms of biological role, assembles around the rod to form the L-ring and probably protects the motor/basal body from shearing forces during rotation. This Sulfurihydrogenibium sp. (strain YO3AOP1) protein is Flagellar P-ring protein.